Consider the following 90-residue polypeptide: Sakacin-A immunity factor (90 aa).

Imparts immunity to sakacin-A to naturally sensitive host strains. This chain is Sakacin-A immunity factor (saiA), found in Latilactobacillus sakei (Lactobacillus sakei).